Consider the following 212-residue polypeptide: Ribonuclease HII (212 aa).

In terms of domain architecture, RNase H type-2 spans 1–205 (MTICGVDEAG…VQDILDRASQ (205 aa)). 3 residues coordinate a divalent metal cation: aspartate 7, glutamate 8, and aspartate 100.

Belongs to the RNase HII family. The cofactor is Mn(2+). Mg(2+) is required as a cofactor.

It is found in the cytoplasm. It carries out the reaction Endonucleolytic cleavage to 5'-phosphomonoester.. Endonuclease that specifically degrades the RNA of RNA-DNA hybrids. This chain is Ribonuclease HII, found in Methanocorpusculum labreanum (strain ATCC 43576 / DSM 4855 / Z).